The chain runs to 27 residues: uncharacterized protein (27 aa).

It is found in the plastid. It localises to the chloroplast. This is an uncharacterized protein from Anthoceros angustus (Hornwort).